A 252-amino-acid chain; its full sequence is Probable transcriptional regulatory protein HNE_0161 (252 aa).

The protein belongs to the TACO1 family.

It localises to the cytoplasm. In Hyphomonas neptunium (strain ATCC 15444), this protein is Probable transcriptional regulatory protein HNE_0161.